A 57-amino-acid chain; its full sequence is Zinc finger protein MJ0458.1 (57 aa).

4 short sequence motifs (c(P)XCG motif) span residues 8 to 12 (CISCN), 26 to 30 (CPNCG), 37 to 41 (CERCR), and 49 to 53 (CPKCG). 2 residues coordinate Zn(2+): Cys26 and Cys29. Cys49 and Cys52 together coordinate Zn(2+).

Monomer in solution.

Functionally, zinc-binding protein that binds only one zinc ion. The sequence is that of Zinc finger protein MJ0458.1 from Methanocaldococcus jannaschii (strain ATCC 43067 / DSM 2661 / JAL-1 / JCM 10045 / NBRC 100440) (Methanococcus jannaschii).